Here is a 389-residue protein sequence, read N- to C-terminus: Glutamate 5-kinase (389 aa).

Lys16 lines the ATP pocket. The substrate site is built by Ser56, Asp143, and Asn155. 175-176 (SD) contributes to the ATP binding site. One can recognise a PUA domain in the interval 281 to 358 (AGGLHVDDGA…AEIEAILGYP (78 aa)).

The protein belongs to the glutamate 5-kinase family.

The protein resides in the cytoplasm. The catalysed reaction is L-glutamate + ATP = L-glutamyl 5-phosphate + ADP. The protein operates within amino-acid biosynthesis; L-proline biosynthesis; L-glutamate 5-semialdehyde from L-glutamate: step 1/2. In terms of biological role, catalyzes the transfer of a phosphate group to glutamate to form L-glutamate 5-phosphate. The chain is Glutamate 5-kinase from Rhizobium leguminosarum bv. trifolii (strain WSM2304).